An 880-amino-acid polypeptide reads, in one-letter code: MSNSIKVVCRFRPQNRIENEQGAQPVVKFEADDTCALDSNGAAGSFTFDRVFGMSSRQKDIFDFSIKPTVDDILNGYNGTVFAYGQTGAGKSYTMMGTNLDNDDGRGVIPRIVEQIFASILSSPGTIEYTVRVSYMEIYMERIRDLLQPQNDNLPIHEEKNRGVYVKGLLEVYVSSVQEVYEVLKRGGDARVVASTNMNAESSRSHSIFVITITQKNVETGSAKSGQLFLVDLAGSEKVGKTGASGQTLEEAKKINKSLSALGMVINNLTDGKSSHIPYRDSKLTRILQESLGGNSRTTLIINCSPSSYNAEETLSTLRFGMRAKAIKNKAKVNAELSPAELKALLRKAQSQVTTFETYVSTLEGEVQLWRKGESVPKEQWAPPLAGVSGAKAAAAQTPRPSTPSRLATESRAETPVAERSATPGIPIDKDEREEFLRRENELQDQITEKETQIAAAEKTLRDTKEELTYLKERDTKVNKDNEKLTSEANEFKMQLERLAFESKEAQITMDSLKEANAELTAELDELKQQLLNVKMSAKESTAALDEKEKRKAEKMAQMMAGFDLGGDVFSENEATIKKVIDHIDSLHEQSSAGEAIPPDEFEELKAKLVETQGIVRQAELSMFGSSSNDANVKRREELEQRLQVLEQEYEDLLERNLGEGDVAEIKERLEKAYSNNQDIKVELVEDLKKEVAQKSAEIEKFKAVNEDLQQRVKSGSASNGTAPGSASGKTVQQQIAEFDVMKKSLMRDLQNRCERVVELEISLDETREQYNNVLRSSNNRAQQKKMAFLERNLEQLTHVQRQLVEQNGSLKKEVAIAERKLIARNERIQSLESLLQDSQEKLTTASHRYGFPLYFRIDFNHTSIALLTFPLDSKPNCQQ.

The region spanning 4–327 is the Kinesin motor domain; sequence SIKVVCRFRP…LRFGMRAKAI (324 aa). Residues 85 to 92 and 235 to 242 contribute to the ATP site; these read GQTGAGKS and GSEKVGKT. The tract at residues 388-426 is disordered; that stretch reads VSGAKAAAAQTPRPSTPSRLATESRAETPVAERSATPGI. Over residues 399–408 the composition is skewed to polar residues; that stretch reads PRPSTPSRLA. Residues 428–849 are a coiled coil; it reads IDKDEREEFL…QEKLTTASHR (422 aa).

This sequence belongs to the TRAFAC class myosin-kinesin ATPase superfamily. Kinesin family. Kinesin subfamily.

It localises to the cytoplasm. Its subcellular location is the cytoskeleton. Kinesin is a microtubule-associated force-producing protein that may play a role in organelle transport. Its motor activity is directed toward the microtubule's plus end. In Botryotinia fuckeliana (Noble rot fungus), this protein is Kinesin heavy chain (klp1).